A 473-amino-acid polypeptide reads, in one-letter code: 3-isopropylmalate dehydratase large subunit 2 (473 aa).

The [4Fe-4S] cluster site is built by C350, C410, and C413.

It belongs to the aconitase/IPM isomerase family. LeuC type 1 subfamily. In terms of assembly, heterodimer of LeuC and LeuD. [4Fe-4S] cluster serves as cofactor.

It catalyses the reaction (2R,3S)-3-isopropylmalate = (2S)-2-isopropylmalate. It participates in amino-acid biosynthesis; L-leucine biosynthesis; L-leucine from 3-methyl-2-oxobutanoate: step 2/4. Its function is as follows. Catalyzes the isomerization between 2-isopropylmalate and 3-isopropylmalate, via the formation of 2-isopropylmaleate. In Salmonella choleraesuis (strain SC-B67), this protein is 3-isopropylmalate dehydratase large subunit 2.